Reading from the N-terminus, the 173-residue chain is Crossover junction endodeoxyribonuclease RuvC (173 aa).

Residues aspartate 8, glutamate 67, and aspartate 139 contribute to the active site. Residues aspartate 8, glutamate 67, and aspartate 139 each contribute to the Mg(2+) site.

It belongs to the RuvC family. As to quaternary structure, homodimer which binds Holliday junction (HJ) DNA. The HJ becomes 2-fold symmetrical on binding to RuvC with unstacked arms; it has a different conformation from HJ DNA in complex with RuvA. In the full resolvosome a probable DNA-RuvA(4)-RuvB(12)-RuvC(2) complex forms which resolves the HJ. Mg(2+) serves as cofactor.

It localises to the cytoplasm. The enzyme catalyses Endonucleolytic cleavage at a junction such as a reciprocal single-stranded crossover between two homologous DNA duplexes (Holliday junction).. In terms of biological role, the RuvA-RuvB-RuvC complex processes Holliday junction (HJ) DNA during genetic recombination and DNA repair. Endonuclease that resolves HJ intermediates. Cleaves cruciform DNA by making single-stranded nicks across the HJ at symmetrical positions within the homologous arms, yielding a 5'-phosphate and a 3'-hydroxyl group; requires a central core of homology in the junction. The consensus cleavage sequence is 5'-(A/T)TT(C/G)-3'. Cleavage occurs on the 3'-side of the TT dinucleotide at the point of strand exchange. HJ branch migration catalyzed by RuvA-RuvB allows RuvC to scan DNA until it finds its consensus sequence, where it cleaves and resolves the cruciform DNA. The sequence is that of Crossover junction endodeoxyribonuclease RuvC from Shewanella sp. (strain ANA-3).